Here is a 287-residue protein sequence, read N- to C-terminus: Large ribosomal subunit protein uL2 (287 aa).

The segment at 203-287 is disordered; sequence LSAGKAGRNR…SKRGRGGRES (85 aa). Basic residues-rich tracts occupy residues 209–220 and 258–287; these read GRNRWKGRRPKV and KTRK…GRES.

It belongs to the universal ribosomal protein uL2 family. Part of the 50S ribosomal subunit. Forms a bridge to the 30S subunit in the 70S ribosome.

Functionally, one of the primary rRNA binding proteins. Required for association of the 30S and 50S subunits to form the 70S ribosome, for tRNA binding and peptide bond formation. It has been suggested to have peptidyltransferase activity; this is somewhat controversial. Makes several contacts with the 16S rRNA in the 70S ribosome. In Nostoc sp. (strain PCC 7120 / SAG 25.82 / UTEX 2576), this protein is Large ribosomal subunit protein uL2.